Reading from the N-terminus, the 163-residue chain is Inorganic pyrophosphatase (163 aa).

A Mg(2+)-binding site is contributed by Glu9. Positions 17, 31, and 43 each coordinate substrate. Mg(2+) contacts are provided by Asp53, Asp58, Asp85, and Asp90. Asp90 serves as the catalytic Proton acceptor. Tyr127 lines the substrate pocket.

Belongs to the PPase family. As to quaternary structure, homohexamer. The cofactor is Mg(2+).

The protein resides in the cytoplasm. It carries out the reaction diphosphate + H2O = 2 phosphate + H(+). Functionally, catalyzes the hydrolysis of inorganic pyrophosphate (PPi) forming two phosphate ions. The sequence is that of Inorganic pyrophosphatase from Leifsonia xyli subsp. xyli (strain CTCB07).